The following is a 173-amino-acid chain: Large ribosomal subunit protein uL16 (173 aa).

The protein belongs to the universal ribosomal protein uL16 family.

This is Large ribosomal subunit protein uL16 from Methanosarcina mazei (strain ATCC BAA-159 / DSM 3647 / Goe1 / Go1 / JCM 11833 / OCM 88) (Methanosarcina frisia).